A 345-amino-acid polypeptide reads, in one-letter code: Calcium/calmodulin-dependent protein kinase type 1 (345 aa).

A disordered region spans residues 1–23; sequence MPLFGSKKETAKKSSKKDKDEGK. A Protein kinase domain is found at 31 to 287; the sequence is YILKDLLGTG…CKQALGHPWI (257 aa). ATP-binding positions include 37–45 and Lys61; that span reads LGTGAFSQV. The active-site Proton acceptor is Asp153. The tract at residues 287–327 is autoinhibitory domain; it reads ISGNAASTENIHSSVSEQLKKNFAKSRWRQAYHATAVIRQM. The interval 307-328 is calmodulin-binding; that stretch reads KNFAKSRWRQAYHATAVIRQMR.

It belongs to the protein kinase superfamily. CAMK Ser/Thr protein kinase family. CaMK subfamily. In terms of tissue distribution, highly expressed in hepatopancreas and to a lesser extent in gills. Low expression in hemocytes, testis, ovary, heart, eyestalk, muscle and epidermis.

The catalysed reaction is L-seryl-[protein] + ATP = O-phospho-L-seryl-[protein] + ADP + H(+). The enzyme catalyses L-threonyl-[protein] + ATP = O-phospho-L-threonyl-[protein] + ADP + H(+). Activated by Ca(2+)/calmodulin. Binding of calmodulin results in conformational change that relieves intrasteric autoinhibition. Calcium/calmodulin-dependent protein kinase that operates in the calcium-triggered CaMKK-CaMK1 signaling cascade and, upon calcium influx, regulates transcription activators activity, cell cycle, hormone production, cell differentiation, actin filament organization and neurite outgrowth. Involved in molting. In Macrobrachium nipponense (Oriental river shrimp), this protein is Calcium/calmodulin-dependent protein kinase type 1.